Reading from the N-terminus, the 886-residue chain is DNA mismatch repair protein MutS (886 aa).

627 to 634 (GPNMGGKS) is a binding site for ATP. The tract at residues 834-857 (VECADAPAPSDATHPALDRLRDID) is disordered.

It belongs to the DNA mismatch repair MutS family.

In terms of biological role, this protein is involved in the repair of mismatches in DNA. It is possible that it carries out the mismatch recognition step. This protein has a weak ATPase activity. The protein is DNA mismatch repair protein MutS of Burkholderia vietnamiensis (strain G4 / LMG 22486) (Burkholderia cepacia (strain R1808)).